The chain runs to 566 residues: MARQPYRFPQARIPERGSGVFRLTVRNAMAHRDSEMKEECLREDLKFYFMSPCEKYRARRQIPWKLGLQILKIVMVTTQLVRFGLSNQLVVAFKEDNTVAFKHLFLKGYSGTDEDDYSCSVYTQEDAYESIFFAINQYHQLKDITLGTLGYGENEDNRIGLKVCKQHYKKGTMFPSNETLNIDNDVELDCVQLDLQDLSKKPPDWKNSSFFRLEFYRLLQVEISFHLKGIDLQTIHSRELPDCYVFQNTIIFDNKAHSGKIKIYFDSDAKIEECKDLNIFGSTQKNAQYVLVFDAFVIVICLASLILCTRSIVLALRLRKRFLNFFLEKYKRPVCDTDQWEFINGWYVLVIISDLMTIIGSILKMEIKAKNLTNYDLCSIFLGTSTLLVWVGVIRYLGYFQAYNVLILTMQASLPKVLRFCACAGMIYLGYTFCGWIVLGPYHDKFENLNTVAECLFSLVNGDDMFATFAQIQQKSILVWLFSRLYLYSFISLFIYMILSLFIALITDSYDTIKKFQQNGFPETDLQEFLKECSSKEEYQKESSAFLSCICCRRRKRSDDHLIPIS.

The Cytoplasmic portion of the chain corresponds to Met-1–Lys-65. The chain crosses the membrane as a helical span at residues Leu-66–Ser-86. The Extracellular portion of the chain corresponds to Asn-87–Gln-288. Residues Lys-107 to Thr-123 are extracellular/lumenal pore loop. 2 disulfides stabilise this stretch: Cys-164-Cys-190 and Cys-243-Cys-274. The helical transmembrane segment at Tyr-289 to Thr-309 threads the bilayer. The Cytoplasmic portion of the chain corresponds to Arg-310–Trp-346. Residues Tyr-347–Ile-367 form a helical membrane-spanning segment. Topologically, residues Lys-368–Asp-376 are extracellular. A helical transmembrane segment spans residues Leu-377–Leu-397. Residues Gly-398–Arg-419 lie on the Cytoplasmic side of the membrane. A helical transmembrane segment spans residues Phe-420–Gly-440. At Pro-441–Asn-448 the chain is on the extracellular side. The segment at residues Leu-449 to Phe-469 is an intramembrane region (pore-forming). Positions Asn-461–Asp-464 match the Selectivity filter motif. Over Ala-470–Trp-480 the chain is Extracellular. A helical transmembrane segment spans residues Leu-481–Phe-502. The Cytoplasmic portion of the chain corresponds to Ile-503–Ser-566.

It belongs to the transient receptor (TC 1.A.4) family. Polycystin subfamily. MCOLN2 sub-subfamily. In terms of assembly, forms homooligomeric complexes; probably tetrameric. Can heterooligomerize with MCOLN1; heteromeric assemblies have different channel properties as compared to the respective homooligomers and may be tissue-specific. Interacts with TMEM176A.

Its subcellular location is the cell membrane. It localises to the late endosome membrane. The protein localises to the lysosome membrane. The protein resides in the recycling endosome membrane. The catalysed reaction is Ca(2+)(in) = Ca(2+)(out). It catalyses the reaction Fe(2+)(in) = Fe(2+)(out). Channel activity is reduced by low extracellular/lumenal pH level. Functionally, nonselective cation channel probably playing a role in the regulation of membrane trafficking events. Acts as a Ca(2+)-permeable cation channel with inwardly rectifying activity. May activate ARF6 and be involved in the trafficking of GPI-anchored cargo proteins to the cell surface via the ARF6-regulated recycling pathway. May play a role in immune processes. In adaptive immunity, TRPML2 and TRPML1 may play redundant roles in the function of the specialized lysosomes of B cells. In the innate immune response, may play a role in the regulation of chemokine secretion and macrophage migration. Through a possible and probably tissue-specific heteromerization with MCOLN1 may be at least in part involved in many lysosome-dependent cellular events. Also functions as a Fe(2+) permeable channel. This is Mucolipin-2 from Homo sapiens (Human).